The sequence spans 240 residues: Large ribosomal subunit protein uL3 (240 aa).

Disordered stretches follow at residues 139–164 (VSHRSIGSTGGRQDPGKTFKNKKMPG) and 215–240 (DAPKPGKFRLADGGEQAAPAAEQEGV). N5-methylglutamine is present on glutamine 151. A compositionally biased stretch (low complexity) spans 225–240 (ADGGEQAAPAAEQEGV).

It belongs to the universal ribosomal protein uL3 family. Part of the 50S ribosomal subunit. Forms a cluster with proteins L14 and L19. Post-translationally, methylated by PrmB.

Its function is as follows. One of the primary rRNA binding proteins, it binds directly near the 3'-end of the 23S rRNA, where it nucleates assembly of the 50S subunit. This Rhodopseudomonas palustris (strain BisA53) protein is Large ribosomal subunit protein uL3.